The sequence spans 273 residues: Exosome complex component Rrp42 (273 aa).

It belongs to the RNase PH family. Rrp42 subfamily. Component of the archaeal exosome complex. Forms a hexameric ring-like arrangement composed of 3 Rrp41-Rrp42 heterodimers. The hexameric ring associates with a trimer of Rrp4 and/or Csl4 subunits.

The protein resides in the cytoplasm. Its function is as follows. Non-catalytic component of the exosome, which is a complex involved in RNA degradation. Contributes to the structuring of the Rrp41 active site. This Thermococcus gammatolerans (strain DSM 15229 / JCM 11827 / EJ3) protein is Exosome complex component Rrp42.